Here is a 373-residue protein sequence, read N- to C-terminus: UDP-N-acetylglucosamine--N-acetylmuramyl-(pentapeptide) pyrophosphoryl-undecaprenol N-acetylglucosamine transferase (373 aa).

Residues 14–16 (TAG), Asn-128, Arg-165, Ser-199, and Gln-295 contribute to the UDP-N-acetyl-alpha-D-glucosamine site.

The protein belongs to the glycosyltransferase 28 family. MurG subfamily.

The protein localises to the cell membrane. It catalyses the reaction di-trans,octa-cis-undecaprenyl diphospho-N-acetyl-alpha-D-muramoyl-L-alanyl-D-glutamyl-meso-2,6-diaminopimeloyl-D-alanyl-D-alanine + UDP-N-acetyl-alpha-D-glucosamine = di-trans,octa-cis-undecaprenyl diphospho-[N-acetyl-alpha-D-glucosaminyl-(1-&gt;4)]-N-acetyl-alpha-D-muramoyl-L-alanyl-D-glutamyl-meso-2,6-diaminopimeloyl-D-alanyl-D-alanine + UDP + H(+). Its pathway is cell wall biogenesis; peptidoglycan biosynthesis. Its function is as follows. Cell wall formation. Catalyzes the transfer of a GlcNAc subunit on undecaprenyl-pyrophosphoryl-MurNAc-pentapeptide (lipid intermediate I) to form undecaprenyl-pyrophosphoryl-MurNAc-(pentapeptide)GlcNAc (lipid intermediate II). In Mycobacterium sp. (strain KMS), this protein is UDP-N-acetylglucosamine--N-acetylmuramyl-(pentapeptide) pyrophosphoryl-undecaprenol N-acetylglucosamine transferase.